The sequence spans 291 residues: Probable cell wall amidase LytH (291 aa).

A signal peptide spans Met-1–Asp-40. The 65-residue stretch at Glu-41 to Asn-105 folds into the SH3b domain. Residues Asp-109–Lys-146 form a disordered region. One can recognise a MurNAc-LAA domain in the interval Ile-122–Arg-286.

It belongs to the N-acetylmuramoyl-L-alanine amidase 3 family.

It localises to the secreted. In terms of biological role, probably involved in cell-wall metabolism. The sequence is that of Probable cell wall amidase LytH (lytH) from Staphylococcus saprophyticus subsp. saprophyticus (strain ATCC 15305 / DSM 20229 / NCIMB 8711 / NCTC 7292 / S-41).